Here is a 563-residue protein sequence, read N- to C-terminus: BOS complex subunit NCLN (563 aa).

The first 42 residues, 1–42 (MLEEAGEVLENVLKASCLPLGFIVFLPAVLLLVAPPLPAADA), serve as a signal peptide directing secretion. Residues 43 to 522 (AHEFTVYRMQ…VMNAYRVKPA (480 aa)) lie on the Lumenal side of the membrane. 2 N-linked (GlcNAc...) asparagine glycosylation sites follow: Asn241 and Asn428. Residues 523–543 (IFDLLLALCIGAYLGMAYTAV) form a helical membrane-spanning segment. Over 544–563 (QHFHVLYKTVQRLLLKAKAQ) the chain is Cytoplasmic.

The protein belongs to the nicastrin family. As to quaternary structure, component of the back of Sec61 (BOS) complex, composed of NCLN/Nicalin, NOMO1 and TMEM147. The BOS complex is part of the multi-pass translocon (MPT) complex, composed of three subcomplexes, the GEL complex (composed of RAB5IF/OPTI and TMCO1), the BOS complex (composed of NCLN/Nicalin, NOMO1 and TMEM147) and the PAT complex (composed of WDR83OS/Asterix and CCDC47). The MPT complex associates with the SEC61 complex.

The protein localises to the endoplasmic reticulum membrane. Its function is as follows. Component of the multi-pass translocon (MPT) complex that mediates insertion of multi-pass membrane proteins into the lipid bilayer of membranes. The MPT complex takes over after the SEC61 complex: following membrane insertion of the first few transmembrane segments of proteins by the SEC61 complex, the MPT complex occludes the lateral gate of the SEC61 complex to promote insertion of subsequent transmembrane regions. May antagonize Nodal signaling and subsequent organization of axial structures during mesodermal patterning, via its interaction with NOMO. The chain is BOS complex subunit NCLN (Ncln) from Rattus norvegicus (Rat).